Here is a 255-residue protein sequence, read N- to C-terminus: Acetylglutamate kinase (255 aa).

Substrate-binding positions include 40–41 (GG), arginine 62, and asparagine 153.

It belongs to the acetylglutamate kinase family. ArgB subfamily.

The protein resides in the cytoplasm. It carries out the reaction N-acetyl-L-glutamate + ATP = N-acetyl-L-glutamyl 5-phosphate + ADP. The protein operates within amino-acid biosynthesis; L-arginine biosynthesis; N(2)-acetyl-L-ornithine from L-glutamate: step 2/4. In terms of biological role, catalyzes the ATP-dependent phosphorylation of N-acetyl-L-glutamate. This chain is Acetylglutamate kinase, found in Bacillus cereus (strain G9842).